A 250-amino-acid chain; its full sequence is Ribosomal RNA small subunit methyltransferase J (250 aa).

S-adenosyl-L-methionine is bound by residues 101 to 102, 117 to 118, 153 to 154, and Asp-171; these read RD, ER, and SS.

The protein belongs to the methyltransferase superfamily. RsmJ family.

Its subcellular location is the cytoplasm. The catalysed reaction is guanosine(1516) in 16S rRNA + S-adenosyl-L-methionine = N(2)-methylguanosine(1516) in 16S rRNA + S-adenosyl-L-homocysteine + H(+). Specifically methylates the guanosine in position 1516 of 16S rRNA. The polypeptide is Ribosomal RNA small subunit methyltransferase J (Escherichia fergusonii (strain ATCC 35469 / DSM 13698 / CCUG 18766 / IAM 14443 / JCM 21226 / LMG 7866 / NBRC 102419 / NCTC 12128 / CDC 0568-73)).